We begin with the raw amino-acid sequence, 144 residues long: Large ribosomal subunit protein uL13 (144 aa).

Belongs to the universal ribosomal protein uL13 family. In terms of assembly, part of the 50S ribosomal subunit.

Functionally, this protein is one of the early assembly proteins of the 50S ribosomal subunit, although it is not seen to bind rRNA by itself. It is important during the early stages of 50S assembly. The polypeptide is Large ribosomal subunit protein uL13 (Syntrophomonas wolfei subsp. wolfei (strain DSM 2245B / Goettingen)).